Consider the following 122-residue polypeptide: Large ribosomal subunit protein uL22 (122 aa).

The protein belongs to the universal ribosomal protein uL22 family. As to quaternary structure, part of the 50S ribosomal subunit.

Functionally, this protein binds specifically to 23S rRNA; its binding is stimulated by other ribosomal proteins, e.g. L4, L17, and L20. It is important during the early stages of 50S assembly. It makes multiple contacts with different domains of the 23S rRNA in the assembled 50S subunit and ribosome. Its function is as follows. The globular domain of the protein is located near the polypeptide exit tunnel on the outside of the subunit, while an extended beta-hairpin is found that lines the wall of the exit tunnel in the center of the 70S ribosome. This Caldicellulosiruptor saccharolyticus (strain ATCC 43494 / DSM 8903 / Tp8T 6331) protein is Large ribosomal subunit protein uL22.